Consider the following 431-residue polypeptide: Adenylosuccinate lyase (431 aa).

N(6)-(1,2-dicarboxyethyl)-AMP contacts are provided by residues Arg4–Tyr5, Asn67–Asp69, and Thr93–Ser94. Catalysis depends on His141, which acts as the Proton donor/acceptor. Gln212 contributes to the N(6)-(1,2-dicarboxyethyl)-AMP binding site. Catalysis depends on Ser262, which acts as the Proton donor/acceptor. N(6)-(1,2-dicarboxyethyl)-AMP-binding positions include Ser263, Lys268 to Asn270, and Ser307 to Tyr311.

This sequence belongs to the lyase 1 family. Adenylosuccinate lyase subfamily. As to quaternary structure, homotetramer. Residues from neighboring subunits contribute catalytic and substrate-binding residues to each active site.

It carries out the reaction N(6)-(1,2-dicarboxyethyl)-AMP = fumarate + AMP. The catalysed reaction is (2S)-2-[5-amino-1-(5-phospho-beta-D-ribosyl)imidazole-4-carboxamido]succinate = 5-amino-1-(5-phospho-beta-D-ribosyl)imidazole-4-carboxamide + fumarate. It participates in purine metabolism; AMP biosynthesis via de novo pathway; AMP from IMP: step 2/2. The protein operates within purine metabolism; IMP biosynthesis via de novo pathway; 5-amino-1-(5-phospho-D-ribosyl)imidazole-4-carboxamide from 5-amino-1-(5-phospho-D-ribosyl)imidazole-4-carboxylate: step 2/2. Its function is as follows. Catalyzes two reactions in de novo purine nucleotide biosynthesis. Catalyzes the breakdown of 5-aminoimidazole- (N-succinylocarboxamide) ribotide (SAICAR or 2-[5-amino-1-(5-phospho-beta-D-ribosyl)imidazole-4-carboxamido]succinate) to 5-aminoimidazole-4-carboxamide ribotide (AICAR or 5-amino-1-(5-phospho-beta-D-ribosyl)imidazole-4-carboxamide) and fumarate, and of adenylosuccinate (ADS or N(6)-(1,2-dicarboxyethyl)-AMP) to adenosine monophosphate (AMP) and fumarate. The sequence is that of Adenylosuccinate lyase (purB) from Thermotoga maritima (strain ATCC 43589 / DSM 3109 / JCM 10099 / NBRC 100826 / MSB8).